The following is a 156-amino-acid chain: ATP synthase subunit b (156 aa).

Residues 7 to 27 form a helical membrane-spanning segment; it reads LIGQTVAFIIFVWFCMKFVWP.

The protein belongs to the ATPase B chain family. In terms of assembly, F-type ATPases have 2 components, F(1) - the catalytic core - and F(0) - the membrane proton channel. F(1) has five subunits: alpha(3), beta(3), gamma(1), delta(1), epsilon(1). F(0) has three main subunits: a(1), b(2) and c(10-14). The alpha and beta chains form an alternating ring which encloses part of the gamma chain. F(1) is attached to F(0) by a central stalk formed by the gamma and epsilon chains, while a peripheral stalk is formed by the delta and b chains.

The protein resides in the cell inner membrane. Functionally, f(1)F(0) ATP synthase produces ATP from ADP in the presence of a proton or sodium gradient. F-type ATPases consist of two structural domains, F(1) containing the extramembraneous catalytic core and F(0) containing the membrane proton channel, linked together by a central stalk and a peripheral stalk. During catalysis, ATP synthesis in the catalytic domain of F(1) is coupled via a rotary mechanism of the central stalk subunits to proton translocation. Its function is as follows. Component of the F(0) channel, it forms part of the peripheral stalk, linking F(1) to F(0). This Shewanella sp. (strain MR-4) protein is ATP synthase subunit b.